Consider the following 294-residue polypeptide: 4-hydroxy-tetrahydrodipicolinate synthase (294 aa).

Thr47 lines the pyruvate pocket. Tyr135 serves as the catalytic Proton donor/acceptor. Lys163 functions as the Schiff-base intermediate with substrate in the catalytic mechanism. Ile205 provides a ligand contact to pyruvate.

The protein belongs to the DapA family. Homotetramer; dimer of dimers.

Its subcellular location is the cytoplasm. The catalysed reaction is L-aspartate 4-semialdehyde + pyruvate = (2S,4S)-4-hydroxy-2,3,4,5-tetrahydrodipicolinate + H2O + H(+). The protein operates within amino-acid biosynthesis; L-lysine biosynthesis via DAP pathway; (S)-tetrahydrodipicolinate from L-aspartate: step 3/4. Catalyzes the condensation of (S)-aspartate-beta-semialdehyde [(S)-ASA] and pyruvate to 4-hydroxy-tetrahydrodipicolinate (HTPA). The chain is 4-hydroxy-tetrahydrodipicolinate synthase from Rickettsia typhi (strain ATCC VR-144 / Wilmington).